The following is a 543-amino-acid chain: Serine/threonine-protein kinase PkaA (543 aa).

In terms of domain architecture, Protein kinase spans 8 to 276 (YLLEEPLGRG…ENLARGLRVV (269 aa)). ATP contacts are provided by residues 14 to 22 (LGRGATGTV) and Lys48. Asp142 acts as the Proton acceptor in catalysis. The interval 303–480 (PAPAQVPGAP…RQRSANPMRI (178 aa)) is disordered. The segment covering 352–361 (VMPPVPPGQP) has biased composition (pro residues). 2 stretches are compositionally biased toward low complexity: residues 407–420 (RQVS…RQAP) and 428–451 (PGYG…QPQR). Over residues 452-461 (YAPPPAPEPQ) the composition is skewed to pro residues.

This sequence belongs to the protein kinase superfamily. Ser/Thr protein kinase family. Autophosphorylated mainly at Thr and slightly at Ser.

The enzyme catalyses L-seryl-[protein] + ATP = O-phospho-L-seryl-[protein] + ADP + H(+). It carries out the reaction L-threonyl-[protein] + ATP = O-phospho-L-threonyl-[protein] + ADP + H(+). The polypeptide is Serine/threonine-protein kinase PkaA (pkaA) (Streptomyces coelicolor (strain ATCC BAA-471 / A3(2) / M145)).